Reading from the N-terminus, the 432-residue chain is Beta-fructosidase (432 aa).

Substrate-binding positions include 14–17, Q33, W41, 74–75, Y92, 137–138, 188–190, T208, and W260; these read WMND, FS, RD, and EIE. D17 is an active-site residue.

The protein belongs to the glycosyl hydrolase 32 family.

It catalyses the reaction Hydrolysis of terminal non-reducing beta-D-fructofuranoside residues in beta-D-fructofuranosides.. Functionally, hydrolysis of sucrose, raffinose, inulin and levan. Specific for the fructose moiety and the beta-anomeric configuration of the glycosidic linkages of its substrates. The enzyme released fructose from sucrose and raffinose, and the fructose polymer inulin is hydrolyzed quantitatively in an exo-type fashion. This is Beta-fructosidase (bfrA) from Thermotoga maritima (strain ATCC 43589 / DSM 3109 / JCM 10099 / NBRC 100826 / MSB8).